The following is a 257-amino-acid chain: Very long chain fatty acid elongase F (257 aa).

7 helical membrane passes run 10-30, 55-75, 98-118, 135-155, 158-178, 191-211, and 221-241; these read IPVVSNPWITMGTLIGYLLFV, IFQILYNGLILVLGVHFLFVL, LICTLYLVNKFVDLVETIFFV, FAMAFFGYLYYCFHGYGGVAF, CLLNTAVHVIMYAYYYLSSIS, ITIAQLVQFAIILLHCTITLA, and LTYGCGSLSAFFAVIFSQFYY.

It belongs to the ELO family. In terms of tissue distribution, highly expressed in females. Little or no expression detected in males.

It localises to the endoplasmic reticulum membrane. It carries out the reaction a very-long-chain acyl-CoA + malonyl-CoA + H(+) = a very-long-chain 3-oxoacyl-CoA + CO2 + CoA. The protein operates within lipid metabolism; fatty acid biosynthesis. In terms of biological role, condensing enzyme that elongates saturated and monounsaturated very long chain fatty acids, to yield products up to 30 carbons in length. May also elongate diunsaturated fatty acids. Important for courtship behavior where it probably has a role in female pheromone biosynthesis. The chain is Very long chain fatty acid elongase F from Drosophila melanogaster (Fruit fly).